Reading from the N-terminus, the 91-residue chain is Cell division protein ZapA (91 aa).

Residues 59 to 86 (TAVNIANEYLKLKEEYDRLAAKLRREKG) adopt a coiled-coil conformation.

Belongs to the ZapA family. Type 2 subfamily. Homodimer. Interacts with FtsZ.

The protein localises to the cytoplasm. Its function is as follows. Activator of cell division through the inhibition of FtsZ GTPase activity, therefore promoting FtsZ assembly into bundles of protofilaments necessary for the formation of the division Z ring. It is recruited early at mid-cell but it is not essential for cell division. The protein is Cell division protein ZapA of Geobacillus thermodenitrificans (strain NG80-2).